Reading from the N-terminus, the 299-residue chain is ATP phosphoribosyltransferase (299 aa).

It belongs to the ATP phosphoribosyltransferase family. Long subfamily. Equilibrium between an active dimeric form, an inactive hexameric form and higher aggregates. Interconversion between the various forms is largely reversible and is influenced by the natural substrates and inhibitors of the enzyme. Mg(2+) is required as a cofactor.

The protein localises to the cytoplasm. It carries out the reaction 1-(5-phospho-beta-D-ribosyl)-ATP + diphosphate = 5-phospho-alpha-D-ribose 1-diphosphate + ATP. The protein operates within amino-acid biosynthesis; L-histidine biosynthesis; L-histidine from 5-phospho-alpha-D-ribose 1-diphosphate: step 1/9. Its activity is regulated as follows. Feedback inhibited by histidine. In terms of biological role, catalyzes the condensation of ATP and 5-phosphoribose 1-diphosphate to form N'-(5'-phosphoribosyl)-ATP (PR-ATP). Has a crucial role in the pathway because the rate of histidine biosynthesis seems to be controlled primarily by regulation of HisG enzymatic activity. This is ATP phosphoribosyltransferase from Escherichia coli O17:K52:H18 (strain UMN026 / ExPEC).